The chain runs to 1040 residues: Eukaryotic translation initiation factor 3 subunit A (1040 aa).

Positions Leu-92 to Ala-121 form a coiled coil. The PCI domain occupies Met-339–Phe-523. Residues Arg-608–Ala-906 are a coiled coil. Basic and acidic residues-rich tracts occupy residues Ala-617–Arg-632 and Glu-795–Arg-901. 2 disordered regions span residues Ala-617–Gln-641 and Glu-795–Gln-1040. 4 stretches are compositionally biased toward low complexity: residues Leu-908–Pro-917, Lys-945–Ala-955, Ser-978–Pro-993, and Ser-1004–Ser-1018.

This sequence belongs to the eIF-3 subunit A family. In terms of assembly, component of the eukaryotic translation initiation factor 3 (eIF-3) complex.

The protein localises to the cytoplasm. In terms of biological role, RNA-binding component of the eukaryotic translation initiation factor 3 (eIF-3) complex, which is involved in protein synthesis of a specialized repertoire of mRNAs and, together with other initiation factors, stimulates binding of mRNA and methionyl-tRNAi to the 40S ribosome. The eIF-3 complex specifically targets and initiates translation of a subset of mRNAs involved in cell proliferation. This chain is Eukaryotic translation initiation factor 3 subunit A (tif32), found in Aspergillus terreus (strain NIH 2624 / FGSC A1156).